The primary structure comprises 188 residues: RNA 2',3'-cyclic phosphodiesterase (188 aa).

The Proton donor role is filled by H42. Short sequence motifs (HXTX) lie at residues 42 to 45 (HMTL) and 130 to 133 (HVTI). The Proton acceptor role is filled by H130.

It belongs to the 2H phosphoesterase superfamily. ThpR family.

The catalysed reaction is a 3'-end 2',3'-cyclophospho-ribonucleotide-RNA + H2O = a 3'-end 2'-phospho-ribonucleotide-RNA + H(+). Functionally, hydrolyzes RNA 2',3'-cyclic phosphodiester to an RNA 2'-phosphomonoester. The chain is RNA 2',3'-cyclic phosphodiesterase from Aquifex aeolicus (strain VF5).